The primary structure comprises 409 residues: Elongation factor Tu (409 aa).

The 205-residue stretch at 10–214 (KPHVNIGTIG…AVDSYIPTPE (205 aa)) folds into the tr-type G domain. The G1 stretch occupies residues 19-26 (GHVDHGKT). Residue 19-26 (GHVDHGKT) participates in GTP binding. Thr26 is a binding site for Mg(2+). Residues 60–64 (GITIN) form a G2 region. The segment at 81 to 84 (DCPG) is G3. GTP contacts are provided by residues 81–85 (DCPGH) and 136–139 (NKVD). Positions 136–139 (NKVD) are G4. The interval 174-176 (SGL) is G5.

Belongs to the TRAFAC class translation factor GTPase superfamily. Classic translation factor GTPase family. EF-Tu/EF-1A subfamily. As to quaternary structure, monomer.

Its subcellular location is the cytoplasm. The enzyme catalyses GTP + H2O = GDP + phosphate + H(+). Functionally, GTP hydrolase that promotes the GTP-dependent binding of aminoacyl-tRNA to the A-site of ribosomes during protein biosynthesis. The sequence is that of Elongation factor Tu from Cyanothece sp. (strain PCC 7425 / ATCC 29141).